Here is a 255-residue protein sequence, read N- to C-terminus: tRNA (guanine-N(7)-)-methyltransferase (255 aa).

The segment at 1–21 is disordered; it reads MMHDDPNEAGLPPHDDAIPDE. 4 residues coordinate S-adenosyl-L-methionine: glutamate 86, glutamate 111, aspartate 138, and aspartate 161. Residue aspartate 161 is part of the active site. Residues lysine 165, aspartate 197, and 232–235 each bind substrate; that span reads TKFE.

The protein belongs to the class I-like SAM-binding methyltransferase superfamily. TrmB family.

The catalysed reaction is guanosine(46) in tRNA + S-adenosyl-L-methionine = N(7)-methylguanosine(46) in tRNA + S-adenosyl-L-homocysteine. It functions in the pathway tRNA modification; N(7)-methylguanine-tRNA biosynthesis. Catalyzes the formation of N(7)-methylguanine at position 46 (m7G46) in tRNA. The protein is tRNA (guanine-N(7)-)-methyltransferase of Burkholderia lata (strain ATCC 17760 / DSM 23089 / LMG 22485 / NCIMB 9086 / R18194 / 383).